A 292-amino-acid chain; its full sequence is Thyroxine 5-deiodinase (292 aa).

Residues Val-1 to Thr-30 lie on the Cytoplasmic side of the membrane. A helical; Signal-anchor for type II membrane protein transmembrane segment spans residues Ala-31 to Leu-50. The Extracellular portion of the chain corresponds to Asp-51–Val-292. The active site involves Sec-158. Residue Sec-158 is a non-standard amino acid, selenocysteine.

Belongs to the iodothyronine deiodinase family. Monomer. Homodimer. May undergo minor heretodimerization with DIO1 and DIO2.

It is found in the cell membrane. The protein resides in the endosome membrane. It carries out the reaction 3,3',5'-triiodo-L-thyronine + iodide + A + H(+) = L-thyroxine + AH2. The enzyme catalyses 3,3'-diiodo-L-thyronine + iodide + A + H(+) = 3,3',5-triiodo-L-thyronine + AH2. It catalyses the reaction 3-iodo-L-thyronine + iodide + A + H(+) = 3,5-diiodo-L-thyronine + AH2. The catalysed reaction is L-thyronine + iodide + A + H(+) = 3-iodo-L-thyronine + AH2. It carries out the reaction 3',5'-diiodo-L-thyronine + iodide + A + H(+) = 3,3',5'-triiodo-L-thyronine + AH2. The enzyme catalyses 3'-iodo-L-thyronine + iodide + A + H(+) = 3,3'-diiodo-L-thyronine + AH2. It catalyses the reaction 3,3',5'-triiodothyronamine + iodide + A + H(+) = 3,3',5,5'-tetraiodothyronamine + AH2. The catalysed reaction is 3',5'-diiodothyronamine + iodide + A + H(+) = 3,3',5'-triiodothyronamine + AH2. It carries out the reaction 3,3'-diiodothyronamine + iodide + A + H(+) = 3,3',5-triiodothyronamine + AH2. The enzyme catalyses 3-iodothyronamine + iodide + A + H(+) = 3,5-diiodothyronamine + AH2. It catalyses the reaction 3'-iodothyronamine + iodide + A + H(+) = 3,3'-diiodothyronamine + AH2. The catalysed reaction is thyronamine + iodide + A + H(+) = 3-iodothyronamine + AH2. Its function is as follows. Plays a crucial role in the metabolism of thyroid hormones (TH) and has specific roles in TH activation and inactivation by deiodination.Catalyzes the deiodination of L-thyroxine (T4) to 3,3',5'-triiodothyronine (rT3), 3,5,3'-triiodothyronine (T3) to 3,3'-diiodothyronine (3,3'-T2), 3,5-diiodothyronine (3,5-T2) to 3-monoiodothyronine (3-T1), rT3 to 3',5'-diiodothyronine (3',5'-T2) and 3,3'-T2 to 3'-monoiodothyronine (3'-T1) via inner-ring deiodination (IRD). Catalyzes the deiodination of 3-T1 to L-thyronine (T0) via outer-ring deiodination (ORD). Catalyzes the tyrosyl ring deiodinations of 3,3',5,5'-tetraiodothyronamine, 3,3',5'-triiodothyronamine, 3,5,3'-triiodothyronamine, 3,5-diiodothyronamine, 3,3'-diiodothyronamine and 3-iodothyronamine. The sequence is that of Thyroxine 5-deiodinase (DIO3) from Ovis aries (Sheep).